Reading from the N-terminus, the 108-residue chain is uncharacterized protein (108 aa).

Positions 81–108 are disordered; sequence TNHHQQQQNHQNQQQQQQQPNGIFENNI. The segment covering 83–99 has biased composition (low complexity); the sequence is HHQQQQNHQNQQQQQQQ.

This is an uncharacterized protein from Dictyostelium discoideum (Social amoeba).